A 309-amino-acid polypeptide reads, in one-letter code: Transcription elongation factor S-II (309 aa).

The TFIIS N-terminal domain maps to 5-79 (EVLVHVKNLE…SSWKDAINKN (75 aa)). The tract at residues 78–142 (KNKRSRQAQQ…NSKNDGVDTA (65 aa)) is disordered. Positions 88–102 (HHQDHAPGNAEDKTT) are enriched in basic and acidic residues. Positions 103-120 (VGESVNGVQQPASSQSDA) are enriched in polar residues. The residue at position 116 (Ser116) is a Phosphoserine. The region spanning 148–264 (LRDQVLKALY…NAQGATIERS (117 aa)) is the TFIIS central domain. A TFIIS-type zinc finger spans residues 267–307 (DRFTCGKCKEKKVSYYQLQTRSADEPLTTFCTCEACGNRWK). Residues Cys271, Cys274, Cys299, and Cys302 each contribute to the Zn(2+) site.

This sequence belongs to the TFS-II family.

Its subcellular location is the nucleus. Its function is as follows. Necessary for efficient RNA polymerase II transcription elongation past template-encoded arresting sites. The arresting sites in DNA have the property of trapping a certain fraction of elongating RNA polymerases that pass through, resulting in locked ternary complexes. Cleavage of the nascent transcript by S-II allows the resumption of elongation from the new 3'-terminus. In terms of biological role, can promote the transfer of one strand of a double-stranded DNA molecule to a homologous single strand and thus may be involved in recombination. This Saccharomyces cerevisiae (strain ATCC 204508 / S288c) (Baker's yeast) protein is Transcription elongation factor S-II (DST1).